Consider the following 281-residue polypeptide: 2-dehydro-3-deoxyphosphooctonate aldolase (281 aa).

The protein belongs to the KdsA family.

It localises to the cytoplasm. It carries out the reaction D-arabinose 5-phosphate + phosphoenolpyruvate + H2O = 3-deoxy-alpha-D-manno-2-octulosonate-8-phosphate + phosphate. Its pathway is carbohydrate biosynthesis; 3-deoxy-D-manno-octulosonate biosynthesis; 3-deoxy-D-manno-octulosonate from D-ribulose 5-phosphate: step 2/3. It participates in bacterial outer membrane biogenesis; lipopolysaccharide biosynthesis. The protein is 2-dehydro-3-deoxyphosphooctonate aldolase of Pseudomonas fluorescens (strain ATCC BAA-477 / NRRL B-23932 / Pf-5).